Reading from the N-terminus, the 84-residue chain is Toxin Acra3 (84 aa).

A signal peptide spans 1 to 17 (MKIIFLVLMMILSEVYS). One can recognise an LCN-type CS-alpha/beta domain in the interval 19–82 (RDGYPVHDGT…VYGDDGIFCK (64 aa)). 4 disulfides stabilise this stretch: Cys-30-Cys-81, Cys-34-Cys-57, Cys-43-Cys-62, and Cys-47-Cys-64. Position 83 is a serine amide (Ser-83).

This sequence belongs to the long (4 C-C) scorpion toxin superfamily. Sodium channel inhibitor family. Beta subfamily. As to expression, expressed by the venom gland.

It is found in the secreted. Functionally, toxin with unknown target. In vivo, induces severe neurotoxic events in mice such as excitability and convulsions, leading to the death of the animals within a few minutes after injection. Exerts very strong cytotoxic effect on a mouse brain tumor cell line (BC3H1) (IC(50)=5 mg/ml). It exerts its effects by inducing a stronger necrosis than apoptosis in BC3H1 cells. This is Toxin Acra3 from Androctonus crassicauda (Arabian fat-tailed scorpion).